Here is a 392-residue protein sequence, read N- to C-terminus: GDP-mannose transporter (392 aa).

A disordered region spans residues 1–40; the sequence is MANKRNEDIELGPAEGRGSTDKDPFLARRSSSQPNRPQQA. The Cytoplasmic segment spans residues 1 to 55; it reads MANKRNEDIELGPAEGRGSTDKDPFLARRSSSQPNRPQQAGPFGGYFDKIDHSPG. The segment covering 29–38 has biased composition (polar residues); the sequence is RSSSQPNRPQ. The helical transmembrane segment at 56–76 threads the bilayer; the sequence is ASIIAYCLSSISMTVVNKYVV. Over 77–80 the chain is Lumenal; sequence SGSE. Residues 81–101 form a helical membrane-spanning segment; that stretch reads WNLNFFYLAVQSLVCTAAILI. Residues 102-121 are Cytoplasmic-facing; the sequence is CKQLGMFQNLAAFDSTKAKK. A helical membrane pass occupies residues 122 to 144; that stretch reads WFPISLLLVGMIYTSTKALQFLS. Over 145–149 the chain is Lumenal; that stretch reads VPVYT. The chain crosses the membrane as a helical span at residues 150–168; the sequence is IFKNLTIIVVAYGEVLWFG. The Cytoplasmic portion of the chain corresponds to 169-174; the sequence is GSVTPM. Residues 175–198 traverse the membrane as a helical segment; that stretch reads ALLSFGLMVLSSVIAAWADIQAAV. Residues 199 to 213 are Lumenal-facing; sequence EGVGHTAEATDAIST. Residues 214 to 234 traverse the membrane as a helical segment; that stretch reads LNAGYAWMGMNVFCTAAYLLG. Residues 235–248 are Cytoplasmic-facing; sequence MRKVIKKMNFKDYD. A helical membrane pass occupies residues 249 to 269; that stretch reads TMFYNNLLTIPVLIVFSLLFE. Over 270–287 the chain is Lumenal; it reads DWSNDNLIKNFPVETRNS. The helical transmembrane segment at 288–308 threads the bilayer; that stretch reads LFIGMIYSGLAAIFISYCSAW. Over 309-316 the chain is Cytoplasmic; that stretch reads CIRVTSST. The chain crosses the membrane as a helical span at residues 317 to 337; that stretch reads TYSMVGALNKLPLAISGLIFF. Over 338–342 the chain is Lumenal; sequence DAPVT. Residues 343–361 traverse the membrane as a helical segment; the sequence is FGSVTAIFVGFVSGLVYTW. Residues 362-392 lie on the Cytoplasmic side of the membrane; that stretch reads SKTRQKVSQILPTTQPTMSASAASNRDAANA.

It belongs to the TPT transporter family. SLC35D subfamily. In terms of assembly, homooligomer.

Its subcellular location is the golgi apparatus membrane. It is found in the cytoplasmic vesicle membrane. It localises to the endoplasmic reticulum membrane. In terms of biological role, involved in the import of GDP-mannose from the cytoplasm into the Golgi lumen. The polypeptide is GDP-mannose transporter (vrg-4) (Neurospora crassa (strain ATCC 24698 / 74-OR23-1A / CBS 708.71 / DSM 1257 / FGSC 987)).